A 472-amino-acid chain; its full sequence is P2X purinoceptor 2 (472 aa).

Residues 1 to 34 are Cytoplasmic-facing; that stretch reads MVRRLARGCWSAFWDYETPKVIVVRNRRLGFVHR. 6 disulfide bridges follow: C9/C430, C113/C164, C124/C147, C130/C158, C214/C224, and C258/C267. The helical transmembrane segment at 35–52 threads the bilayer; that stretch reads MVQLLILLYFVWYVFIVQ. Over 53 to 326 the chain is Extracellular; the sequence is KSYQDSETGP…IVHGQAGKFS (274 aa). Positions 69 and 71 each coordinate ATP. An N-linked (GlcNAc...) asparagine glycan is attached at N182. T184 contributes to the ATP binding site. N239 carries an N-linked (GlcNAc...) asparagine glycan. 3 residues coordinate ATP: S284, N288, and R290. Residue N298 is glycosylated (N-linked (GlcNAc...) asparagine). K308 is a binding site for ATP. A pore-forming motif region spans residues 309-322; that stretch reads AYGIRIDVIVHGQA. The chain crosses the membrane as a helical span at residues 327–347; it reads LIPTIINLATALTSIGVGSFL. Residues 348-472 are Cytoplasmic-facing; sequence CDWILLTFMN…STDPKGLAQL (125 aa). Positions 393–472 are disordered; it reads PPPSHYSQDQ…STDPKGLAQL (80 aa). A compositionally biased stretch (polar residues) spans 456 to 465; that stretch reads PSQQDSTSTD.

This sequence belongs to the P2X receptor family. Homotrimer and heterotrimer; functional P2XRs are organized as homomeric and heteromeric trimers. Homotrimer. Forms heterotrimer with P2RX1. Forms heterotrimer with P2RX6. Forms heterotrimer with P2RX3. As to expression, high levels in pituitary and vas deferens. Lower extent in spinal cord, bladder, brain, adrenal, testis, sensory epithelia from the inner ear.

It is found in the cell membrane. It carries out the reaction Ca(2+)(in) = Ca(2+)(out). It catalyses the reaction K(+)(in) = K(+)(out). The enzyme catalyses Na(+)(in) = Na(+)(out). Fast activation by external ATP. Exhibits slow desensitization during prolonged ATP activation. Not sensitive to the ATP agonist:alpha/beta-methylene-ATP. Its function is as follows. ATP-gated nonselective transmembrane cation channel permeable to potassium, sodium and calcium. Activation by extracellular ATP induces a variety of cellular responses, such as excitatory postsynaptic responses in sensory neurons, neuromuscular junctions (NMJ) formation, hearing, perception of taste and peristalsis. In the inner ear, regulates sound transduction and auditory neurotransmission, outer hair cell electromotility, inner ear gap junctions, and K(+) recycling. Mediates synaptic transmission between neurons and from neurons to smooth muscle. This chain is P2X purinoceptor 2 (P2rx2), found in Rattus norvegicus (Rat).